Reading from the N-terminus, the 308-residue chain is tRNA dimethylallyltransferase (308 aa).

ATP is bound at residue 9–16 (GPTAVGKT). Residue 11–16 (TAVGKT) coordinates substrate. Residues 34-37 (DSMQ) form an interaction with substrate tRNA region.

It belongs to the IPP transferase family. As to quaternary structure, monomer. It depends on Mg(2+) as a cofactor.

It carries out the reaction adenosine(37) in tRNA + dimethylallyl diphosphate = N(6)-dimethylallyladenosine(37) in tRNA + diphosphate. Catalyzes the transfer of a dimethylallyl group onto the adenine at position 37 in tRNAs that read codons beginning with uridine, leading to the formation of N6-(dimethylallyl)adenosine (i(6)A). This chain is tRNA dimethylallyltransferase, found in Lactobacillus delbrueckii subsp. bulgaricus (strain ATCC BAA-365 / Lb-18).